A 246-amino-acid chain; its full sequence is Peptide methionine sulfoxide reductase (246 aa).

Catalysis depends on Cys-48, which acts as the Cysteine sulfenic acid (-SOH) intermediate. Cys-48 and Cys-246 are oxidised to a cystine.

Post-translationally, conjugated to URM1, a ubiquitin-like protein.

The enzyme catalyses L-methionyl-[protein] + [thioredoxin]-disulfide + H2O = L-methionyl-(S)-S-oxide-[protein] + [thioredoxin]-dithiol. It carries out the reaction [thioredoxin]-disulfide + L-methionine + H2O = L-methionine (S)-S-oxide + [thioredoxin]-dithiol. Functionally, has an important function as a repair enzyme for proteins that have been inactivated by oxidation. Catalyzes the reduction of methionine sulfoxide in proteins to methionine. Does not catalyze the reverse reaction involving the oxidation of methionine residues. In Drosophila melanogaster (Fruit fly), this protein is Peptide methionine sulfoxide reductase.